The following is a 96-amino-acid chain: Large ribosomal subunit protein bL25 (96 aa).

Belongs to the bacterial ribosomal protein bL25 family. As to quaternary structure, part of the 50S ribosomal subunit; part of the 5S rRNA/L5/L18/L25 subcomplex. Contacts the 5S rRNA. Binds to the 5S rRNA independently of L5 and L18.

In terms of biological role, this is one of the proteins that binds to the 5S RNA in the ribosome where it forms part of the central protuberance. This Francisella tularensis subsp. tularensis (strain FSC 198) protein is Large ribosomal subunit protein bL25.